A 411-amino-acid polypeptide reads, in one-letter code: Citrate synthase (411 aa).

Active-site residues include histidine 304 and aspartate 363.

Belongs to the citrate synthase family.

The catalysed reaction is oxaloacetate + acetyl-CoA + H2O = citrate + CoA + H(+). The protein operates within carbohydrate metabolism; tricarboxylic acid cycle; isocitrate from oxaloacetate: step 1/2. In Rickettsia massiliae, this protein is Citrate synthase (gltA).